The chain runs to 197 residues: NADH-quinone oxidoreductase subunit C (197 aa).

Belongs to the complex I 30 kDa subunit family. As to quaternary structure, NDH-1 is composed of 14 different subunits. Subunits NuoB, C, D, E, F, and G constitute the peripheral sector of the complex.

It localises to the cell inner membrane. The enzyme catalyses a quinone + NADH + 5 H(+)(in) = a quinol + NAD(+) + 4 H(+)(out). In terms of biological role, NDH-1 shuttles electrons from NADH, via FMN and iron-sulfur (Fe-S) centers, to quinones in the respiratory chain. The immediate electron acceptor for the enzyme in this species is believed to be ubiquinone. Couples the redox reaction to proton translocation (for every two electrons transferred, four hydrogen ions are translocated across the cytoplasmic membrane), and thus conserves the redox energy in a proton gradient. In Rickettsia typhi (strain ATCC VR-144 / Wilmington), this protein is NADH-quinone oxidoreductase subunit C.